A 216-amino-acid chain; its full sequence is Pyrophosphatase PpaX (216 aa).

Aspartate 12 acts as the Nucleophile in catalysis.

It belongs to the HAD-like hydrolase superfamily. PpaX family. Requires Mg(2+) as cofactor.

It catalyses the reaction diphosphate + H2O = 2 phosphate + H(+). In terms of biological role, hydrolyzes pyrophosphate formed during P-Ser-HPr dephosphorylation by HPrK/P. Might play a role in controlling the intracellular pyrophosphate pool. This is Pyrophosphatase PpaX from Bacillus pumilus (strain SAFR-032).